The primary structure comprises 454 residues: tRNA modification GTPase MnmE (454 aa).

3 residues coordinate (6S)-5-formyl-5,6,7,8-tetrahydrofolate: arginine 23, glutamate 80, and lysine 120. The TrmE-type G domain maps to 216–377; the sequence is GMKVVIAGRP…LRNHLKQSMG (162 aa). Asparagine 226 contributes to the K(+) binding site. GTP-binding positions include 226-231, 245-251, 270-273, and 335-338; these read NAGKSS, TDIAGTT, DTAG, and NKAD. Serine 230 serves as a coordination point for Mg(2+). The K(+) site is built by threonine 245, isoleucine 247, and threonine 250. Residue threonine 251 coordinates Mg(2+). Position 454 (lysine 454) interacts with (6S)-5-formyl-5,6,7,8-tetrahydrofolate.

Belongs to the TRAFAC class TrmE-Era-EngA-EngB-Septin-like GTPase superfamily. TrmE GTPase family. Homodimer. Heterotetramer of two MnmE and two MnmG subunits. K(+) serves as cofactor.

Its subcellular location is the cytoplasm. Its function is as follows. Exhibits a very high intrinsic GTPase hydrolysis rate. Involved in the addition of a carboxymethylaminomethyl (cmnm) group at the wobble position (U34) of certain tRNAs, forming tRNA-cmnm(5)s(2)U34. The sequence is that of tRNA modification GTPase MnmE from Escherichia coli O157:H7.